Here is a 278-residue protein sequence, read N- to C-terminus: Probable cytochrome c oxidase subunit 3 (278 aa).

6 helical membrane passes run 21–41, 46–66, 89–109, 174–194, 212–232, and 256–276; these read PWPVLTSFALLLLVIGGVSFM, FNIYILSAGVISVGYCLYSWW, IGMALFILTEIVFFGVFFASF, CVTALALTILLGIFFTTMQAY, FYLATGFHGAHVIIGTIFLIV, and AWYWHFVDVVWLFLFTFVYIF.

It belongs to the cytochrome c oxidase subunit 3 family.

Its subcellular location is the cell membrane. It catalyses the reaction 4 Fe(II)-[cytochrome c] + O2 + 8 H(+)(in) = 4 Fe(III)-[cytochrome c] + 2 H2O + 4 H(+)(out). The protein is Probable cytochrome c oxidase subunit 3 (ctaE) of Rickettsia felis (strain ATCC VR-1525 / URRWXCal2) (Rickettsia azadi).